We begin with the raw amino-acid sequence, 128 residues long: V-type proton ATPase subunit F (128 aa).

Belongs to the V-ATPase F subunit family. As to quaternary structure, V-ATPase is a heteromultimeric enzyme composed of a peripheral catalytic V1 complex (components A to H) attached to an integral membrane V0 proton pore complex (components: a, c, c'', d and e).

It localises to the vacuole membrane. Subunit of the peripheral V1 complex of vacuolar ATPase essential for assembly or catalytic function. V-ATPase is responsible for acidifying a variety of intracellular compartments in eukaryotic cells. This is V-type proton ATPase subunit F (VHA-F) from Arabidopsis thaliana (Mouse-ear cress).